Reading from the N-terminus, the 87-residue chain is MALDYRKTFEIEIINEFQSAIHSKMLNYVLNNELDKSDSTNLQTNLLNQLSNMNQINLFKLSLEELEAYHEYLRSIKKYADSITRTT.

This sequence belongs to the epsilon antitoxin family. In the presence of the zeta toxin, forms an inactive PezA(2)PezT(2) heterotetramer.

Its function is as follows. Antitoxin component of a type II toxin-antitoxin (TA) system. Neutralizes the toxic effect of cognate zeta toxin. Part of a postsegregational killing (PSK) system involved in the killing of plasmid-free cells. Continuous synthesis of the epsilon antitoxin is required to counteract the zeta toxin. In Lactococcus lactis subsp. lactis (Streptococcus lactis), this protein is Antitoxin epsilon.